Here is a 569-residue protein sequence, read N- to C-terminus: Membrane protein insertase YidC (569 aa).

8 consecutive transmembrane segments (helical) span residues 7 to 24, 219 to 239, 299 to 319, 340 to 360, 366 to 386, 436 to 456, 485 to 505, and 526 to 546; these read VLWVIFSFSLLMLWDNYN, GSALGGGSMFMASAFTGPAIY, LYAVGTILPMGTVAPGATASM, FELVKDYGWLTIIAKPIFWLM, ILGNWGWTIIVLTIVIKLAFF, IGGCFPMLVQIPVFISLYWVL, IGTFHLTIGILPILMAISMFI, and PIAFSVMFFFFPAGLVLYWVV.

Belongs to the OXA1/ALB3/YidC family. Type 1 subfamily. Interacts with the Sec translocase complex via SecD. Specifically interacts with transmembrane segments of nascent integral membrane proteins during membrane integration.

The protein resides in the cell inner membrane. In terms of biological role, required for the insertion and/or proper folding and/or complex formation of integral membrane proteins into the membrane. Involved in integration of membrane proteins that insert both dependently and independently of the Sec translocase complex, as well as at least some lipoproteins. Aids folding of multispanning membrane proteins. In Herminiimonas arsenicoxydans, this protein is Membrane protein insertase YidC.